The sequence spans 269 residues: Nitrite transporter NirC (269 aa).

Topologically, residues 1 to 29 (MFTDTINKCAANAARIARLSANNPLGFWV) are cytoplasmic. The helical transmembrane segment at 30–46 (SSAMAGAYVGLGIILIF) threads the bilayer. Residues 47 to 58 (TLGNLLDPSVRP) are Extracellular-facing. A helical membrane pass occupies residues 59–75 (LVMGATFGIALTLVIIA). At 76–107 (GSELFTGHTMFLTLGVKAGTISHGQMWAILPQ) the chain is on the cytoplasmic side. Residues 108–125 (TWLGNLVGSVFVALLYSW) traverse the membrane as a helical segment. Topologically, residues 126 to 153 (GGGSLLPVDTSIVHSVALAKTTAPATVL) are extracellular. The chain crosses the membrane as a helical span at residues 154-172 (FFKGALCNWLVCLAIWMAI). Topologically, residues 173–179 (RTEGTAK) are cytoplasmic. The helical transmembrane segment at 180–195 (FLAIWWCLLAFIASGY) threads the bilayer. Residues 196–230 (EHSVANMTLFALSWFGHHSDAYTLAGIGHNLLWVT) lie on the Extracellular side of the membrane. A helical membrane pass occupies residues 231–250 (LGNTLSGVVFMGLGYWYATP). The Cytoplasmic segment spans residues 251-269 (KSERPAPAKINQPEAAANN).

Belongs to the FNT transporter (TC 1.A.16) family.

It is found in the cell inner membrane. Its function is as follows. Catalyzes nitrite uptake and nitrite export across the cytoplasmic membrane. In Salmonella typhimurium (strain LT2 / SGSC1412 / ATCC 700720), this protein is Nitrite transporter NirC (nirC).